We begin with the raw amino-acid sequence, 952 residues long: G patch domain-containing protein 1 homolog (952 aa).

Disordered stretches follow at residues 104–127, 165–233, 320–345, 370–432, 660–711, and 822–952; these read QGIR…QRRR, GWKP…DDYE, DKKP…EDNS, RSRF…KDHS, PEKV…RNKP, and VAPE…KSKH. Positions 107–123 are enriched in basic and acidic residues; that stretch reads RTRDEFANEDEQKQRSD. The 47-residue stretch at 153 to 199 folds into the G-patch domain; sequence RDKVAVRILKSMGWKPGQGVGPRQTRKEKRQATARNSKEQYLMEHYG. The span at 214–233 shows a compositional bias: acidic residues; that stretch reads DSNNEDEDDEDITFAPDDYE. Residues 323–333 show a composition bias toward basic residues; that stretch reads PKQKKQQHVQQ. Basic and acidic residues-rich tracts occupy residues 375–402, 414–432, and 679–691; these read PMDK…DLNP, QEEK…KDHS, and IQDK…EPSK. Residues 886 to 896 are compositionally biased toward low complexity; sequence ASSSNESSSSD. Basic residues-rich tracts occupy residues 906–934 and 941–952; these read KLSK…KKSK and HKAKKKKKKSKH.

It belongs to the GPATCH1 family.

The protein is G patch domain-containing protein 1 homolog of Drosophila melanogaster (Fruit fly).